The primary structure comprises 507 residues: AMP phosphorylase (507 aa).

AMP-binding positions include Gly-168, 194–199, and Thr-203; that span reads SRAITG. Asp-256 (proton donor) is an active-site residue. Residues Ser-264 and Lys-288 each coordinate AMP.

It belongs to the thymidine/pyrimidine-nucleoside phosphorylase family. Type 2 subfamily.

It carries out the reaction AMP + phosphate = alpha-D-ribose 1,5-bisphosphate + adenine. The catalysed reaction is CMP + phosphate = cytosine + alpha-D-ribose 1,5-bisphosphate. It catalyses the reaction UMP + phosphate = alpha-D-ribose 1,5-bisphosphate + uracil. In terms of biological role, catalyzes the conversion of AMP and phosphate to adenine and ribose 1,5-bisphosphate (R15P). Exhibits phosphorylase activity toward CMP and UMP in addition to AMP. Functions in an archaeal AMP degradation pathway, together with R15P isomerase and RubisCO. The chain is AMP phosphorylase from Methanosarcina mazei (strain ATCC BAA-159 / DSM 3647 / Goe1 / Go1 / JCM 11833 / OCM 88) (Methanosarcina frisia).